We begin with the raw amino-acid sequence, 250 residues long: 5'-nucleotidase SurE (250 aa).

The a divalent metal cation site is built by Asp-8, Asp-9, Ser-39, and Asn-95.

Belongs to the SurE nucleotidase family. Requires a divalent metal cation as cofactor.

The protein localises to the cytoplasm. It catalyses the reaction a ribonucleoside 5'-phosphate + H2O = a ribonucleoside + phosphate. Its function is as follows. Nucleotidase that shows phosphatase activity on nucleoside 5'-monophosphates. The sequence is that of 5'-nucleotidase SurE from Cupriavidus pinatubonensis (strain JMP 134 / LMG 1197) (Cupriavidus necator (strain JMP 134)).